We begin with the raw amino-acid sequence, 531 residues long: Chaperonin GroEL 2 (531 aa).

Residues 30–33, 87–91, glycine 414, and aspartate 494 each bind ATP; these read TLGP and DGTTT.

The protein belongs to the chaperonin (HSP60) family. In terms of assembly, forms a cylinder of 14 subunits composed of two heptameric rings stacked back-to-back. Interacts with the co-chaperonin GroES.

The protein resides in the cytoplasm. The enzyme catalyses ATP + H2O + a folded polypeptide = ADP + phosphate + an unfolded polypeptide.. In terms of biological role, together with its co-chaperonin GroES, plays an essential role in assisting protein folding. The GroEL-GroES system forms a nano-cage that allows encapsulation of the non-native substrate proteins and provides a physical environment optimized to promote and accelerate protein folding. The protein is Chaperonin GroEL 2 of Cutibacterium acnes (strain DSM 16379 / KPA171202) (Propionibacterium acnes).